A 357-amino-acid polypeptide reads, in one-letter code: S-adenosyl-L-methionine:benzoic acid/salicylic acid carboxyl methyltransferase 1 (357 aa).

An S-adenosyl-L-homocysteine-binding site is contributed by Y18. Q25 is a binding site for benzoate. Residues C59, N64, D96, L97, S135, and F136 each contribute to the S-adenosyl-L-homocysteine site. W157 contacts benzoate. Residues N168, D254, F256, and N257 each contribute to the Mg(2+) site. Q260 contacts benzoate.

It belongs to the methyltransferase superfamily. Type-7 methyltransferase family. In terms of tissue distribution, predominantly expressed in petal limbs and tubes of corollas.

The enzyme catalyses benzoate + S-adenosyl-L-methionine = methyl benzoate + S-adenosyl-L-homocysteine. It catalyses the reaction salicylate + S-adenosyl-L-methionine = methyl salicylate + S-adenosyl-L-homocysteine. The protein operates within aromatic compound metabolism. Functionally, converts benzoic acid into the volatile ester methyl benzoates. This scent, mostly produced in a rhythmical, diurnal manner, attracts the pollinators. The chain is S-adenosyl-L-methionine:benzoic acid/salicylic acid carboxyl methyltransferase 1 from Petunia hybrida (Petunia).